Consider the following 382-residue polypeptide: Na(+)/H(+) antiporter NhaA (382 aa).

Helical transmembrane passes span 14–34 (AGGI…NSSF), 49–69 (MSVS…LIGL), 87–107 (IFPA…YVAF), 117–137 (GWAI…ALLG), 146–166 (VFLL…IAFF), 171–191 (LSVL…LLNS), 205–225 (FILW…GVVL), 247–267 (ALHP…NAGI), 285–305 (VALG…YVAV), 321–341 (IFAV…ISSL), and 356–376 (LGIL…LHIS).

It belongs to the NhaA Na(+)/H(+) (TC 2.A.33) antiporter family.

The protein localises to the cell inner membrane. The enzyme catalyses Na(+)(in) + 2 H(+)(out) = Na(+)(out) + 2 H(+)(in). Na(+)/H(+) antiporter that extrudes sodium in exchange for external protons. In Aliivibrio salmonicida (strain LFI1238) (Vibrio salmonicida (strain LFI1238)), this protein is Na(+)/H(+) antiporter NhaA.